A 238-amino-acid polypeptide reads, in one-letter code: Small ribosomal subunit protein uS2 (238 aa).

This sequence belongs to the universal ribosomal protein uS2 family.

In Chloroflexus aggregans (strain MD-66 / DSM 9485), this protein is Small ribosomal subunit protein uS2.